A 453-amino-acid chain; its full sequence is UPF0210 protein Pcar_2119 (453 aa).

Belongs to the UPF0210 family. Homodimer.

The chain is UPF0210 protein Pcar_2119 from Syntrophotalea carbinolica (strain DSM 2380 / NBRC 103641 / GraBd1) (Pelobacter carbinolicus).